Consider the following 241-residue polypeptide: Putative CRISPR-associated endoribonuclease-like protein Cas6 (241 aa).

Belongs to the CRISPR-associated protein Cas6/Cse3/CasE family. In terms of assembly, binds crRNA.

Functionally, CRISPR (clustered regularly interspaced short palindromic repeat), is an adaptive immune system that provides protection against mobile genetic elements (viruses, transposable elements and conjugative plasmids). CRISPR clusters contain sequences complementary to antecedent mobile elements and target invading nucleic acids. CRISPR clusters are transcribed and processed into CRISPR RNA (crRNA), also called psiRNA (prokaryotic silencing) in this organism (Potential). This chain is Putative CRISPR-associated endoribonuclease-like protein Cas6 (cas6b), found in Pyrococcus furiosus (strain ATCC 43587 / DSM 3638 / JCM 8422 / Vc1).